Here is a 521-residue protein sequence, read N- to C-terminus: UDP-N-acetylmuramate--L-alanine ligase (521 aa).

G136–T142 lines the ATP pocket.

It belongs to the MurCDEF family.

It localises to the cytoplasm. It catalyses the reaction UDP-N-acetyl-alpha-D-muramate + L-alanine + ATP = UDP-N-acetyl-alpha-D-muramoyl-L-alanine + ADP + phosphate + H(+). The protein operates within cell wall biogenesis; peptidoglycan biosynthesis. Its function is as follows. Cell wall formation. This chain is UDP-N-acetylmuramate--L-alanine ligase, found in Bifidobacterium adolescentis (strain ATCC 15703 / DSM 20083 / NCTC 11814 / E194a).